The sequence spans 466 residues: Soluble pyridine nucleotide transhydrogenase (466 aa).

Residue 36–45 (ERYHNVGGGC) participates in FAD binding.

The protein belongs to the class-I pyridine nucleotide-disulfide oxidoreductase family. FAD serves as cofactor.

The protein resides in the cytoplasm. It catalyses the reaction NAD(+) + NADPH = NADH + NADP(+). Conversion of NADPH, generated by peripheral catabolic pathways, to NADH, which can enter the respiratory chain for energy generation. The chain is Soluble pyridine nucleotide transhydrogenase from Salmonella paratyphi C (strain RKS4594).